The primary structure comprises 460 residues: A-type ATP synthase subunit B (460 aa).

This sequence belongs to the ATPase alpha/beta chains family. As to quaternary structure, has multiple subunits with at least A(3), B(3), C, D, E, F, H, I and proteolipid K(x).

It is found in the cell membrane. Its function is as follows. Component of the A-type ATP synthase that produces ATP from ADP in the presence of a proton gradient across the membrane. The B chain is a regulatory subunit. The sequence is that of A-type ATP synthase subunit B from Methanosarcina barkeri.